The chain runs to 118 residues: Large ribosomal subunit protein uL18 (118 aa).

Belongs to the universal ribosomal protein uL18 family. As to quaternary structure, part of the 50S ribosomal subunit; part of the 5S rRNA/L5/L18/L25 subcomplex. Contacts the 5S and 23S rRNAs.

In terms of biological role, this is one of the proteins that bind and probably mediate the attachment of the 5S RNA into the large ribosomal subunit, where it forms part of the central protuberance. The sequence is that of Large ribosomal subunit protein uL18 from Campylobacter jejuni subsp. jejuni serotype O:6 (strain 81116 / NCTC 11828).